The chain runs to 467 residues: Ammonium transporter Rh type C (467 aa).

At 1 to 9 the chain is on the cytoplasmic side; sequence MAWNTNLRW. The helical transmembrane segment at 10-30 threads the bilayer; it reads RLPLLCLVLEVAMVVLFGLFV. Residues 31 to 61 are Extracellular-facing; sequence RYSPDADSSWSNEKRKGNITSDLENEFYYRY. Asparagine 48 carries an N-linked (GlcNAc...) asparagine glycan. The chain crosses the membrane as a helical span at residues 62 to 82; it reads PSFQDVHVMVFLGFGFLMTFL. The Cytoplasmic portion of the chain corresponds to 83 to 86; the sequence is QRYG. A helical transmembrane segment spans residues 87–107; it reads YCALGFNFLLAALGVQWALLM. The Extracellular segment spans residues 108-131; that stretch reads QGWFQYTKDRLILLGIKNLIDADS. A run of 2 helical transmembrane segments spans residues 132–152 and 153–173; these read CVASVCVAFGAVLGKVSPVQM and LLMTFFQVALFSANEFLLLHV. The Extracellular segment spans residues 174–179; that stretch reads LEVKDA. The helical transmembrane segment at 180–200 threads the bilayer; sequence GGSITIHIFGAYFGLTVTWIL. Residues 201-219 are Cytoplasmic-facing; the sequence is YRHNLDHSRERQSSVYHSN. Residues 220-240 traverse the membrane as a helical segment; sequence LFAMIGTLFLWIYWPSFNSAM. The Extracellular segment spans residues 241-251; it reads SNYGDAQHRAA. The chain crosses the membrane as a helical span at residues 252-272; it reads INTYCSLAASVLTSVAMSSVL. The Cytoplasmic portion of the chain corresponds to 273 to 282; that stretch reads HKKGKLDMVH. The chain crosses the membrane as a helical span at residues 283–303; that stretch reads IQNATLAGGVGVGTAAEMMLM. Proline 304 is a topological domain (extracellular). Residues 305-325 traverse the membrane as a helical segment; it reads YGALIVGFICGAVSTLGFVYL. The Cytoplasmic portion of the chain corresponds to 326–343; sequence TPFLESRLRIQDTCGIHN. A helical transmembrane segment spans residues 344–364; that stretch reads LHGIPGLIGAIVGAVTAAYAS. Residues 365–391 are Extracellular-facing; sequence PDGDRGFVYPFGFHNEKDEKVQGRFQA. The chain crosses the membrane as a helical span at residues 392–412; it reads FGLLLTLAIAMVGGTIMGLIL. Residues 413 to 467 lie on the Cytoplasmic side of the membrane; sequence KLPFWGQAMDEDCFDDSIYWEMHEEKSSSPEDHTHKPSVPTEPVEQPTSSATLAP. Residues 436–447 are compositionally biased toward basic and acidic residues; it reads EEKSSSPEDHTH. Positions 436-467 are disordered; sequence EEKSSSPEDHTHKPSVPTEPVEQPTSSATLAP. A compositionally biased stretch (polar residues) spans 458 to 467; it reads QPTSSATLAP.

Belongs to the ammonium transporter (TC 2.A.49) family. Rh subfamily. As to quaternary structure, homotrimer. N-glycosylated.

The protein resides in the cell membrane. The protein localises to the apical cell membrane. It catalyses the reaction NH4(+)(in) = NH4(+)(out). The catalysed reaction is methylamine(out) = methylamine(in). The enzyme catalyses CO2(out) = CO2(in). Ammonium transporter involved in the maintenance of acid-base homeostasis. Transports ammonium and its related derivative methylammonium across the plasma membrane of epithelial cells likely contributing to renal transepithelial ammonia transport and ammonia metabolism. Postulated to primarily mediate an electroneutral bidirectional transport of NH3 ammonia species according to a mechanism that implies interaction of an NH4(+) ion with acidic residues of the pore entry followed by dissociation of NH4(+) into NH3 and H(+). As a result NH3 transits through the central pore and is protonated on the extracellular side reforming NH4(+). May act as a CO2 channel providing for renal acid secretion. The polypeptide is Ammonium transporter Rh type C (RHCG) (Oryctolagus cuniculus (Rabbit)).